The sequence spans 230 residues: MKKINAIILLSSLTSASVFAGAYVENREAYNLASDQGEVMLRVGYNFDMGAGIMLTNTYNFQREDELKHGYNEIEGWYPLFKPTDKLTIQPGGLINDKSIGSGGAVYLDVNYKFVPWFNLTVRNRYNHNNYSSTDLSGELDNNDTYEIGTYWNFKITDKFSYTFEPHYFMRVNDFNSSNGKDHHWEITNTFRYRINEHWLPYFELRWLDRNVEPYHREQNQIRIGTKYFF.

The first 20 residues, 1 to 20 (MKKINAIILLSSLTSASVFA), serve as a signal peptide directing secretion.

Belongs to the oligogalacturonate-specific porin KdgM (TC 1.B.35) family. OmpL subfamily.

It localises to the cell outer membrane. Functionally, outer membrane channel protein that allows an efficient diffusion of low-molecular-weight solutes such as small sugars and tetraglycine. However, the specific substrate recognized by the OmpL channel is unknown. The protein is Porin OmpL (ompL) of Escherichia coli (strain K12).